A 1051-amino-acid polypeptide reads, in one-letter code: Ubiquitin-activating enzyme E1 1 (1051 aa).

A run of 2 repeats spans residues 56-194 (GRET…GSVF) and 453-605 (GSKL…QMVI). Residues 56-605 (GRETMKRLFG…GAKCNTQMVI (550 aa)) form a 2 approximate repeats region. ATP is bound by residues Ala-472, Asp-498, Arg-509, Lys-522, and 570-571 (DN). The Glycyl thioester intermediate role is filled by Cys-626.

This sequence belongs to the ubiquitin-activating E1 family. As to quaternary structure, monomer. In terms of processing, the N-terminus is blocked.

It carries out the reaction ATP + ubiquitin + [E1 ubiquitin-activating enzyme]-L-cysteine = AMP + diphosphate + S-ubiquitinyl-[E1 ubiquitin-activating enzyme]-L-cysteine.. It functions in the pathway protein modification; protein ubiquitination. In terms of biological role, activates ubiquitin by first adenylating its C-terminal glycine residue with ATP, and thereafter linking this residue to the side chain of a cysteine residue in E1, yielding a ubiquitin-E1 thioester and free AMP. The protein is Ubiquitin-activating enzyme E1 1 of Triticum aestivum (Wheat).